Reading from the N-terminus, the 213-residue chain is Maleamate amidohydrolase (213 aa).

Cys-154 acts as the Nucleophile in catalysis.

The protein belongs to the isochorismatase family.

The enzyme catalyses maleamate + H2O = maleate + NH4(+). Its pathway is cofactor degradation; nicotinate degradation. Maleamate amidase that transforms maleamate into maleate and ammonia in the aerobic nicotinate degradation pathway. The protein is Maleamate amidohydrolase (nicF) of Pseudomonas putida (strain ATCC 47054 / DSM 6125 / CFBP 8728 / NCIMB 11950 / KT2440).